Consider the following 507-residue polypeptide: Transmembrane protein 184 homolog DDB_G0276041 (507 aa).

7 helical membrane-spanning segments follow: residues 13–33, 50–70, 88–108, 141–161, 179–199, 222–242, and 260–280; these read IVML…AVIL, IVRI…SLFF, AYVL…EEAL, LGLV…AAIL, LWIT…LVMF, VVFF…FDAL, and FLVC…FSYS. 6 N-linked (GlcNAc...) asparagine glycosylation sites follow: N360, N375, N470, N473, N477, and N498. The disordered stretch occupies residues 448–500; the sequence is NGASNNNNNNNNNNNNINNNNNNNSNNSNNNSNSQFESIDINSNSVNSNKNQS. Over residues 451–500 the composition is skewed to low complexity; sequence SNNNNNNNNNNNNINNNNNNNSNNSNNNSNSQFESIDINSNSVNSNKNQS.

This sequence belongs to the TMEM184 family.

The protein localises to the cell membrane. In terms of biological role, probable transporter. The protein is Transmembrane protein 184 homolog DDB_G0276041 (tmem184B) of Dictyostelium discoideum (Social amoeba).